The sequence spans 244 residues: Tubulin-folding cofactor B (244 aa).

N-acetylmethionine is present on Met1. Residue Tyr98 is modified to Phosphotyrosine. Ser110 is modified (phosphoserine). One can recognise a CAP-Gly domain in the interval 183–225 (GLTDFKPGYWIGIRYDEPLGKNDGSVNGKRYFECQAKYGAFVK). At Lys219 the chain carries N6-acetyllysine.

It belongs to the TBCB family. In terms of assembly, supercomplex made of cofactors A to E. Cofactors A and D function by capturing and stabilizing tubulin in a quasi-native conformation. Cofactor E binds to the cofactor D-tubulin complex; interaction with cofactor C then causes the release of tubulin polypeptides that are committed to the native state. Cofactors B and E can form a heterodimer which binds to alpha-tubulin and enhances their ability to dissociate tubulin heterodimers. Interacts with GAN. Interacts with DCTN1. Ubiquitinated in the presence of GAN which targets it for degradation by the proteasome. In terms of processing, phosphorylation by PAK1 is required for normal function.

Its subcellular location is the cytoplasm. It localises to the cytoskeleton. Binds to alpha-tubulin folding intermediates after their interaction with cytosolic chaperonin in the pathway leading from newly synthesized tubulin to properly folded heterodimer. Involved in regulation of tubulin heterodimer dissociation. May function as a negative regulator of axonal growth. The polypeptide is Tubulin-folding cofactor B (TBCB) (Bos taurus (Bovine)).